The primary structure comprises 243 residues: tRNA (guanine-N(1)-)-methyltransferase (243 aa).

S-adenosyl-L-methionine-binding positions include G108 and 127-132 (LGDFVL).

It belongs to the RNA methyltransferase TrmD family. In terms of assembly, homodimer.

The protein localises to the cytoplasm. It catalyses the reaction guanosine(37) in tRNA + S-adenosyl-L-methionine = N(1)-methylguanosine(37) in tRNA + S-adenosyl-L-homocysteine + H(+). In terms of biological role, specifically methylates guanosine-37 in various tRNAs. This is tRNA (guanine-N(1)-)-methyltransferase from Streptococcus equi subsp. zooepidemicus (strain H70).